Consider the following 257-residue polypeptide: Transmembrane protein 101 (257 aa).

Helical transmembrane passes span 21-40 (VLLT…LYAE), 52-72 (VPYL…MSFG), 77-97 (WFAL…YVGG), 110-130 (YSRT…AGEL), 139-159 (SLQS…AYSL), 182-202 (LFFV…YVTL), 206-226 (ILAV…AYWH), and 233-253 (FWNQ…AVIL).

It is found in the membrane. Its function is as follows. May activate NF-kappa-B signaling pathways. The chain is Transmembrane protein 101 (TMEM101) from Bos taurus (Bovine).